We begin with the raw amino-acid sequence, 207 residues long: Large ribosomal subunit protein bL25 (207 aa).

The segment at 182–207 is disordered; sequence QDLGDESVQEEQAAESAEGESEGSED.

The protein belongs to the bacterial ribosomal protein bL25 family. CTC subfamily. Part of the 50S ribosomal subunit; part of the 5S rRNA/L5/L18/L25 subcomplex. Contacts the 5S rRNA. Binds to the 5S rRNA independently of L5 and L18.

In terms of biological role, this is one of the proteins that binds to the 5S RNA in the ribosome where it forms part of the central protuberance. This Micrococcus luteus (strain ATCC 4698 / DSM 20030 / JCM 1464 / CCM 169 / CCUG 5858 / IAM 1056 / NBRC 3333 / NCIMB 9278 / NCTC 2665 / VKM Ac-2230) (Micrococcus lysodeikticus) protein is Large ribosomal subunit protein bL25.